We begin with the raw amino-acid sequence, 44 residues long: Thymosin beta (44 aa).

Positions 1–44 (MSDKHDKPDISEVTKFDKSKLKKTETHEKNPLPTKETIDQEKQG) are disordered. Position 2 is an N-acetylserine (serine 2).

Expressed in regenerating axons.

The protein localises to the cytoplasm. The protein resides in the cytoskeleton. Plays an important role in the organization of the cytoskeleton. Binds to and sequesters actin monomers (G actin) and therefore inhibits actin polymerization. May be involved in the regulation of structural plasticity in the CNS. The protein is Thymosin beta of Aplysia californica (California sea hare).